We begin with the raw amino-acid sequence, 494 residues long: MSEWTKEQRYQKYEDVDQQTIEKLTEQVNQSEYRQTFHIQPQIGLLNDPNGLIYFKGNYYVSHQWFPLGPVHGLKYWYTYQSKDLVDFKAIGPTIKPDTKDDSHGVYSGSAFEYHDHLYYMYTANHRDSDWNRISTQHIAKMSKDGSINKFPKAVISAPPSGYTQHFRDPKVHVQDGVYYAMIAAQNIKKQGRILQYRSTDIVNWEFQGEVQTNLDDFGYMWECPDYFNLNGYDMLLFCPQGIDSEGERFKNIYQSGYIMGQYDINNLTMNHADFHELDYGFDFYAPQTFLDENGQRILIGWMGLPDINYPSDADGWAHCLTIPRVLTIESGNLKQRPIKALEKLRTNEETALGYANKFTRQLHPYEGKQFELIIDILENEATEVYFEVRTSKTESTLITYNKREQKLTLDRSESGQLPEPVEGTTRSTYLDTPLSKLQLFVDTSSVEIFCNDGERVMTARIFTDENATGIKTSTESGQTYLKFTKYDLKGDTI.

Substrate-binding positions include 45 to 48 (LLND), Q64, 107 to 108 (YS), 168 to 169 (RD), and E223. Residue D48 is part of the active site.

Belongs to the glycosyl hydrolase 32 family.

The catalysed reaction is Hydrolysis of terminal non-reducing beta-D-fructofuranoside residues in beta-D-fructofuranosides.. It participates in glycan biosynthesis; sucrose metabolism. The protein is Sucrose-6-phosphate hydrolase (scrB) of Staphylococcus xylosus.